A 159-amino-acid polypeptide reads, in one-letter code: Phosphopantetheine adenylyltransferase (159 aa).

T9 contacts substrate. Residues 9–10 and H17 each bind ATP; that span reads TF. Residues K41, L73, and R87 each coordinate substrate. Residues 88-90, E98, and 123-129 each bind ATP; these read GLR and YSFISST.

It belongs to the bacterial CoaD family. Homohexamer. The cofactor is Mg(2+).

Its subcellular location is the cytoplasm. It catalyses the reaction (R)-4'-phosphopantetheine + ATP + H(+) = 3'-dephospho-CoA + diphosphate. It participates in cofactor biosynthesis; coenzyme A biosynthesis; CoA from (R)-pantothenate: step 4/5. In terms of biological role, reversibly transfers an adenylyl group from ATP to 4'-phosphopantetheine, yielding dephospho-CoA (dPCoA) and pyrophosphate. The protein is Phosphopantetheine adenylyltransferase of Pseudomonas putida (strain ATCC 700007 / DSM 6899 / JCM 31910 / BCRC 17059 / LMG 24140 / F1).